The sequence spans 64 residues: Large ribosomal subunit protein uL30 (64 aa).

It belongs to the universal ribosomal protein uL30 family. In terms of assembly, part of the 50S ribosomal subunit.

This chain is Large ribosomal subunit protein uL30, found in Bdellovibrio bacteriovorus (strain ATCC 15356 / DSM 50701 / NCIMB 9529 / HD100).